Here is a 599-residue protein sequence, read N- to C-terminus: Sulfite reductase [NADPH] flavoprotein alpha-component (599 aa).

Positions 64-202 (ITIISASQTG…AASEWRARVV (139 aa)) constitute a Flavodoxin-like domain. Residues 70-75 (SQTGNA), 117-120 (STQG), and 153-162 (LGDSSYEFFC) each bind FMN. Residues 234 to 448 (DAPLVASLSV…IEHNDNFRLP (215 aa)) form the FAD-binding FR-type domain. FAD is bound by residues Thr-322, Ala-356, 386-389 (RLYS), 404-406 (TVG), Tyr-410, and 419-422 (GGAS). Residues 519 to 520 (SR), 525 to 529 (KVYVQ), and Asp-561 contribute to the NADP(+) site. Tyr-599 serves as a coordination point for FAD.

It belongs to the NADPH-dependent sulphite reductase flavoprotein subunit CysJ family. This sequence in the N-terminal section; belongs to the flavodoxin family. In the C-terminal section; belongs to the flavoprotein pyridine nucleotide cytochrome reductase family. In terms of assembly, alpha(8)-beta(8). The alpha component is a flavoprotein, the beta component is a hemoprotein. FAD is required as a cofactor. FMN serves as cofactor.

It catalyses the reaction hydrogen sulfide + 3 NADP(+) + 3 H2O = sulfite + 3 NADPH + 4 H(+). The protein operates within sulfur metabolism; hydrogen sulfide biosynthesis; hydrogen sulfide from sulfite (NADPH route): step 1/1. Functionally, component of the sulfite reductase complex that catalyzes the 6-electron reduction of sulfite to sulfide. This is one of several activities required for the biosynthesis of L-cysteine from sulfate. The flavoprotein component catalyzes the electron flow from NADPH -&gt; FAD -&gt; FMN to the hemoprotein component. The sequence is that of Sulfite reductase [NADPH] flavoprotein alpha-component from Shigella boydii serotype 4 (strain Sb227).